The primary structure comprises 344 residues: D-beta-hydroxybutyrate dehydrogenase, mitochondrial (344 aa).

The N-terminal 46 residues, 1–46, are a transit peptide targeting the mitochondrion; the sequence is MLTARLSRPLSQLPRKTLNFSDRENGTRGSLLLYSAPFVPVGRRTY. Position 59–83 (59–83) interacts with NAD(+); sequence LITGCDSGFGFSLAKHLHSEGFLVF. An N6-acetyllysine mark is found at lysine 73 and lysine 97. Lysine 103 is subject to N6-acetyllysine; alternate. Residue lysine 103 is modified to N6-succinyllysine; alternate. At lysine 177 the chain carries N6-acetyllysine. Serine 195 lines the substrate pocket. Residue tyrosine 208 is the Proton acceptor of the active site. N6-acetyllysine is present on lysine 212. Serine 219 carries an O-linked (GlcNAc) serine glycan. Phosphoserine is present on serine 246. Lysine 260 carries the post-translational modification N6-acetyllysine; alternate. Residue lysine 260 is modified to N6-succinyllysine; alternate. Lysine 281 carries the N6-acetyllysine modification.

It belongs to the short-chain dehydrogenases/reductases (SDR) family. Homotetramer.

It localises to the mitochondrion inner membrane. Its subcellular location is the mitochondrion matrix. The catalysed reaction is (R)-3-hydroxybutanoate + NAD(+) = acetoacetate + NADH + H(+). Requires phosphatidylcholine as an allosteric activator for enzymatic activity. The protein is D-beta-hydroxybutyrate dehydrogenase, mitochondrial of Bos taurus (Bovine).